The primary structure comprises 615 residues: DNA mismatch repair protein MutL (615 aa).

The tract at residues 363 to 397 (FAEPAVREPVAPRYTPAPASGSRPAAPWPNAQPGY) is disordered. Over residues 378–391 (PAPASGSRPAAPWP) the composition is skewed to low complexity.

It belongs to the DNA mismatch repair MutL/HexB family.

In terms of biological role, this protein is involved in the repair of mismatches in DNA. It is required for dam-dependent methyl-directed DNA mismatch repair. May act as a 'molecular matchmaker', a protein that promotes the formation of a stable complex between two or more DNA-binding proteins in an ATP-dependent manner without itself being part of a final effector complex. This is DNA mismatch repair protein MutL from Escherichia coli O157:H7.